The sequence spans 77 residues: Chaplin-H (77 aa).

An N-terminal signal peptide occupies residues 1-25; that stretch reads MLKKVVAAAAATGGLVLAGAGMAVA. A Chaplin domain is found at 36 to 76; that stretch reads SPGVLSGNVVQVPVHVPVNVCGNTISVIGLLNPAFGNVCIN. 2 forms amyloid fibrils in vitro regions span residues 38-54 and 57-72; these read GVLS…VPVN and GNTI…AFGN. Cysteine 56 and cysteine 74 are joined by a disulfide.

This sequence belongs to the chaplin family. Short chaplin subfamily. In terms of assembly, homodimer; disulfide linked. About 10% of ChpH isolated from cell wall forms disulfide-bonded homodimers.

The protein localises to the cell surface. Its subcellular location is the secreted. It localises to the cell wall. It is found in the fimbrium. One of 8 partially redundant surface-active proteins required for efficient formation of aerial mycelium; the short chaplins assemble into a hydrophobic, amyloidal fibrillar surface layer that envelopes and protects aerial hyphae and spores, presumably anchored to the long chaplins. Chaplins have an overlapping function with the surface-active SapB peptide; chaplins are essential on minimal medium while on rich medium both chaplins and SapB are required for efficient aerial hyphae formation. Chaplins are also involved in cell attachment to a hydrophobic surface. Forms amyloid fibrils in vitro probably composed of stacked beta-sheets. A small chaplin extract (ChpD, ChpE, ChpF, ChpG and ChpH) self-assembles into 2 different amyloids; small fibrils at the air-water interface form an amphipathic membrane that resembles spore-surface structures involved in aerial hyphae formation, and hydrophilic fibrils in solution that resemble the fibers that attach cells to a hydrophobic surface. At the air-water interface the hydrophilic surface is in contact with water (probably equivalent to the peptidoglycan layer), while the hydrophobic face is exposed to the air, making the surface of the aerial hyphae hydrophobic. A minimal chaplin strain capable of forming aerial mycelium/hyphae on minimal medium contains ChpC, ChpE and ChpH. The strain also has restored rodlet formation on the hyphae surface. A small chaplin extract applied to a chaplin-deficient strain restores aerial hyphae formation. The small chaplin extract forms an amyloid-like structure similar to that seen on the surface of cells without rodlets (rdlA-rdlB deletions), and is highly surface active, reducing surface tension from 72 to 26 mJ/m(2), which probably allows escape of hyphae from an aqueous environment into air. This is Chaplin-H from Streptomyces coelicolor (strain ATCC BAA-471 / A3(2) / M145).